A 208-amino-acid polypeptide reads, in one-letter code: Probable splicing factor, arginine/serine-rich 5 (208 aa).

Residues 2-74 (PRLYLGKIPY…MRLVVEMARG (73 aa)) enclose the RRM domain. Residues 71–208 (MARGKPRGND…RSPSPGSPKD (138 aa)) are disordered. The segment covering 84-123 (SRSPRRRSRSPRRRSRTPPRRRSRSRDRKRSRRSRSRSSS) has biased composition (basic residues). The span at 128–153 (PVRESRRRSESRSPSPKRDLKREASR) shows a compositional bias: basic and acidic residues.

This sequence belongs to the splicing factor SR family. In terms of processing, extensively phosphorylated on serine residues in the RS domain.

It localises to the nucleus. Its function is as follows. Plays a functionally redundant role in shifting germ cell sexual differentiation in hermaphrodites. The sequence is that of Probable splicing factor, arginine/serine-rich 5 (rsp-5) from Caenorhabditis elegans.